We begin with the raw amino-acid sequence, 363 residues long: tRNA N6-adenosine threonylcarbamoyltransferase (363 aa).

Fe cation contacts are provided by H138, H142, and Y159. Residues 159–163, D191, D212, and S295 each bind substrate; that span reads YVSGG. D323 is a Fe cation binding site.

It belongs to the KAE1 / TsaD family. It depends on Fe(2+) as a cofactor.

The protein localises to the cytoplasm. It catalyses the reaction L-threonylcarbamoyladenylate + adenosine(37) in tRNA = N(6)-L-threonylcarbamoyladenosine(37) in tRNA + AMP + H(+). In terms of biological role, required for the formation of a threonylcarbamoyl group on adenosine at position 37 (t(6)A37) in tRNAs that read codons beginning with adenine. Is probably involved in the transfer of the threonylcarbamoyl moiety of threonylcarbamoyl-AMP (TC-AMP) to the N6 group of A37. This Hyperthermus butylicus (strain DSM 5456 / JCM 9403 / PLM1-5) protein is tRNA N6-adenosine threonylcarbamoyltransferase.